Consider the following 540-residue polypeptide: Chaperonin GroEL (540 aa).

Residues 29–32 (TIGP), 86–90 (DGTTT), Gly-413, 477–479 (NAA), and Asp-493 each bind ATP.

It belongs to the chaperonin (HSP60) family. As to quaternary structure, forms a cylinder of 14 subunits composed of two heptameric rings stacked back-to-back. Interacts with the co-chaperonin GroES.

The protein resides in the cytoplasm. It carries out the reaction ATP + H2O + a folded polypeptide = ADP + phosphate + an unfolded polypeptide.. Together with its co-chaperonin GroES, plays an essential role in assisting protein folding. The GroEL-GroES system forms a nano-cage that allows encapsulation of the non-native substrate proteins and provides a physical environment optimized to promote and accelerate protein folding. The sequence is that of Chaperonin GroEL from Lactobacillus helveticus (strain DPC 4571).